A 381-amino-acid polypeptide reads, in one-letter code: Succinyl-diaminopimelate desuccinylase (381 aa).

H69 contacts Zn(2+). The active site involves D71. D103 is a Zn(2+) binding site. E137 serves as the catalytic Proton acceptor. Zn(2+) is bound by residues E138, E166, and H355.

This sequence belongs to the peptidase M20A family. DapE subfamily. Homodimer. It depends on Zn(2+) as a cofactor. Co(2+) is required as a cofactor.

It carries out the reaction N-succinyl-(2S,6S)-2,6-diaminopimelate + H2O = (2S,6S)-2,6-diaminopimelate + succinate. It participates in amino-acid biosynthesis; L-lysine biosynthesis via DAP pathway; LL-2,6-diaminopimelate from (S)-tetrahydrodipicolinate (succinylase route): step 3/3. Catalyzes the hydrolysis of N-succinyl-L,L-diaminopimelic acid (SDAP), forming succinate and LL-2,6-diaminopimelate (DAP), an intermediate involved in the bacterial biosynthesis of lysine and meso-diaminopimelic acid, an essential component of bacterial cell walls. In Rickettsia rickettsii (strain Iowa), this protein is Succinyl-diaminopimelate desuccinylase.